Consider the following 277-residue polypeptide: Large ribosomal subunit protein uL2 (277 aa).

Residues glycine 222–lysine 277 are disordered.

The protein belongs to the universal ribosomal protein uL2 family. Part of the 50S ribosomal subunit. Forms a bridge to the 30S subunit in the 70S ribosome.

In terms of biological role, one of the primary rRNA binding proteins. Required for association of the 30S and 50S subunits to form the 70S ribosome, for tRNA binding and peptide bond formation. It has been suggested to have peptidyltransferase activity; this is somewhat controversial. Makes several contacts with the 16S rRNA in the 70S ribosome. The polypeptide is Large ribosomal subunit protein uL2 (Bradyrhizobium sp. (strain ORS 278)).